A 256-amino-acid chain; its full sequence is MAAPMFSIIIPTLNVAAVLPACLDSIARQTCGDFELVLVDGGSTDETLDIANIFAPNLGERLIIHRDTDQGVYDAMNRGVDLATGTWLLFLGADDSLYEADTLARVAAFIGEHEPSDLVYGDVIMRSTNFRWGGAFDLDRLLFKRNICHQAIFYRRGLFGTIGPYNLRYRVLADWDFNIRCFSNPALVTRYMHVVVASYNEFGGLSNTIVDKEFLKRLPMSTRLGIRLVIVLVRRWPKVISRAMVMRTVISWRRRR.

It belongs to the glycosyltransferase 2 family.

Involved in glycosylation steps downstream of mono-O-methyl-glycosyl-p-hydroxybenzoic acid derivative (p-HBAD I) and 2-O-methyl-rhamnosyl-phenolphthiocerol dimycocerosate (mycoside B) during the p-hydroxybenzoic acid derivatives (p-HBAD) and glycosylated phenolphthiocerol dimycocerosates (PGL) biosynthesis. The chain is PGL/p-HBAD biosynthesis glycosyltransferase Mb2981 from Mycobacterium bovis (strain ATCC BAA-935 / AF2122/97).